A 353-amino-acid chain; its full sequence is 3-deoxy-D-manno-octulosonic acid transferase (353 aa).

The Proton acceptor role is filled by glutamate 31. CMP is bound by residues 211–212 (PR), 247–249 (FGI), and 273–276 (NLLE).

Belongs to the glycosyltransferase group 1 family. Glycosyltransferase 30 subfamily. As to quaternary structure, can form homodimer, homotrimer and homotetramer.

It localises to the cell inner membrane. The enzyme catalyses lipid IVA (E. coli) + CMP-3-deoxy-beta-D-manno-octulosonate = alpha-Kdo-(2-&gt;6)-lipid IVA (E. coli) + CMP + H(+). It participates in bacterial outer membrane biogenesis; LPS core biosynthesis. In terms of biological role, involved in lipopolysaccharide (LPS) biosynthesis. Catalyzes the transfer of a single 3-deoxy-D-manno-octulosonate (Kdo) residue from CMP-Kdo to lipid IV(A), the tetraacyldisaccharide-1,4'-bisphosphate precursor of lipid A. Is strictly monofunctional, i.e. is capable of adding only a single Kdo residue to the acceptor lipid. This chain is 3-deoxy-D-manno-octulosonic acid transferase (kdtA), found in Aquifex aeolicus (strain VF5).